The chain runs to 603 residues: Membrane protein insertase YidC (603 aa).

The helical transmembrane segment at 7 to 27 (FFITIALSVLILAVWQYFYVL) threads the bilayer. Positions 38–51 (RVEQQRVEEQKKAA) are enriched in basic and acidic residues. The segment at 38–76 (RVEQQRVEEQKKAAEAANPGAGTPAPAPGTIPNAPGGDT) is disordered. Over residues 52 to 74 (EAANPGAGTPAPAPGTIPNAPGG) the composition is skewed to low complexity. The next 5 helical transmembrane spans lie at 352-372 (FDLL…FWLI), 378-398 (FLGN…ALFF), 452-472 (WPVA…YITI), 497-517 (LFGL…WPLI), and 540-560 (IFTW…AGLV).

It belongs to the OXA1/ALB3/YidC family. Type 1 subfamily. As to quaternary structure, interacts with the Sec translocase complex via SecD. Specifically interacts with transmembrane segments of nascent integral membrane proteins during membrane integration.

The protein localises to the cell inner membrane. Required for the insertion and/or proper folding and/or complex formation of integral membrane proteins into the membrane. Involved in integration of membrane proteins that insert both dependently and independently of the Sec translocase complex, as well as at least some lipoproteins. Aids folding of multispanning membrane proteins. This chain is Membrane protein insertase YidC, found in Mesorhizobium japonicum (strain LMG 29417 / CECT 9101 / MAFF 303099) (Mesorhizobium loti (strain MAFF 303099)).